The following is a 151-amino-acid chain: 3-hydroxyacyl-[acyl-carrier-protein] dehydratase FabZ (151 aa).

H54 is an active-site residue.

This sequence belongs to the thioester dehydratase family. FabZ subfamily.

Its subcellular location is the cytoplasm. It catalyses the reaction a (3R)-hydroxyacyl-[ACP] = a (2E)-enoyl-[ACP] + H2O. Involved in unsaturated fatty acids biosynthesis. Catalyzes the dehydration of short chain beta-hydroxyacyl-ACPs and long chain saturated and unsaturated beta-hydroxyacyl-ACPs. The protein is 3-hydroxyacyl-[acyl-carrier-protein] dehydratase FabZ of Idiomarina loihiensis (strain ATCC BAA-735 / DSM 15497 / L2-TR).